We begin with the raw amino-acid sequence, 1620 residues long: NAD-specific glutamate dehydrogenase (1620 aa).

Lys-851 is a catalytic residue.

This sequence belongs to the Glu/Leu/Phe/Val dehydrogenases family. In terms of assembly, homotetramer. In terms of processing, contains disulfide bonds (interchain).

The catalysed reaction is L-glutamate + NAD(+) + H2O = 2-oxoglutarate + NH4(+) + NADH + H(+). Activity subject to allosteric control by arginine and citrate, which function as positive and negative effectors, respectively. In terms of biological role, involved in arginine catabolism by converting L-glutamate, into 2-oxoglutarate, which is then channeled into the tricarboxylic acid cycle. Can also utilize other amino acids of the glutamate family. This chain is NAD-specific glutamate dehydrogenase (gdhB), found in Pseudomonas aeruginosa (strain ATCC 15692 / DSM 22644 / CIP 104116 / JCM 14847 / LMG 12228 / 1C / PRS 101 / PAO1).